Consider the following 90-residue polypeptide: MQNSAEKEEFKGYLEKSGVIDALTKVLVGLYEESDKPSDALEFIKKHLGNSLGIDVDALKQENADLKAEVSALTQRVDDLSKKLEAANKQ.

This sequence belongs to the AMY1 family.

The protein resides in the nucleus. This chain is c-Myc-binding protein homolog (mycbp), found in Dictyostelium discoideum (Social amoeba).